The chain runs to 92 residues: Acyl carrier protein AcpXL (92 aa).

Residues 2-88 form the Carrier domain; sequence TATFDKVADI…NLCAKIDELK (87 aa). Ser-37 bears the O-(pantetheine 4'-phosphoryl)serine mark.

In terms of processing, 4'-phosphopantetheine is transferred from CoA to a specific serine of apo-ACP by AcpS. This modification is essential for activity because fatty acids are bound in thioester linkage to the sulfhydryl of the prosthetic group.

The protein resides in the cytoplasm. It functions in the pathway glycolipid biosynthesis; KDO(2)-lipid A biosynthesis. In terms of biological role, carrier of the growing fatty acid chain in fatty acid biosynthesis. Is involved in the transfer of long hydroxylated fatty acids to lipid A. Is acylated predominantly with 27-hydroxyoctacosanoic acid. This is Acyl carrier protein AcpXL (acpXL) from Rhizobium etli (strain ATCC 51251 / DSM 11541 / JCM 21823 / NBRC 15573 / CFN 42).